A 113-amino-acid polypeptide reads, in one-letter code: DNA-binding protein Mevan_1162 (113 aa).

The segment covering 1-12 (MDPEEIKQKKLQ) has biased composition (basic and acidic residues). Residues 1-22 (MDPEEIKQKKLQEMQAKAQDPE) form a disordered region.

The protein belongs to the PDCD5 family.

The polypeptide is DNA-binding protein Mevan_1162 (Methanococcus vannielii (strain ATCC 35089 / DSM 1224 / JCM 13029 / OCM 148 / SB)).